The following is a 544-amino-acid chain: Chaperonin GroEL (544 aa).

ATP contacts are provided by residues 29–32 (TLGP), Lys-50, 86–90 (DGTTT), Gly-414, and Asp-495.

The protein belongs to the chaperonin (HSP60) family. Forms a cylinder of 14 subunits composed of two heptameric rings stacked back-to-back. Interacts with the co-chaperonin GroES.

The protein localises to the cytoplasm. It carries out the reaction ATP + H2O + a folded polypeptide = ADP + phosphate + an unfolded polypeptide.. In terms of biological role, together with its co-chaperonin GroES, plays an essential role in assisting protein folding. The GroEL-GroES system forms a nano-cage that allows encapsulation of the non-native substrate proteins and provides a physical environment optimized to promote and accelerate protein folding. This Treponema pallidum subsp. pallidum (strain SS14) protein is Chaperonin GroEL.